Here is a 131-residue protein sequence, read N- to C-terminus: UPF0102 protein YraN (131 aa).

It belongs to the UPF0102 family.

The sequence is that of UPF0102 protein YraN from Salmonella agona (strain SL483).